The sequence spans 86 residues: Large ribosomal subunit protein bL27 (86 aa).

Positions 1–10 are enriched in gly residues; sequence MAQKKGGGST. Positions 1–21 are disordered; sequence MAQKKGGGSTRNGRDSESKRL.

Belongs to the bacterial ribosomal protein bL27 family.

In Ralstonia nicotianae (strain ATCC BAA-1114 / GMI1000) (Ralstonia solanacearum), this protein is Large ribosomal subunit protein bL27.